The chain runs to 593 residues: Aspartate--tRNA(Asp/Asn) ligase (593 aa).

Position 172 (Glu-172) interacts with L-aspartate. The segment at 196 to 199 (QLFK) is aspartate. Arg-218 is an L-aspartate binding site. Residues 218-220 (RDE) and Gln-227 contribute to the ATP site. His-450 is an L-aspartate binding site. Glu-484 is an ATP binding site. L-aspartate is bound at residue Arg-491. An ATP-binding site is contributed by 536-539 (GLDR).

Belongs to the class-II aminoacyl-tRNA synthetase family. Type 1 subfamily. As to quaternary structure, homodimer.

Its subcellular location is the cytoplasm. The enzyme catalyses tRNA(Asx) + L-aspartate + ATP = L-aspartyl-tRNA(Asx) + AMP + diphosphate. Functionally, aspartyl-tRNA synthetase with relaxed tRNA specificity since it is able to aspartylate not only its cognate tRNA(Asp) but also tRNA(Asn). Reaction proceeds in two steps: L-aspartate is first activated by ATP to form Asp-AMP and then transferred to the acceptor end of tRNA(Asp/Asn). The protein is Aspartate--tRNA(Asp/Asn) ligase of Nitrosomonas europaea (strain ATCC 19718 / CIP 103999 / KCTC 2705 / NBRC 14298).